A 370-amino-acid polypeptide reads, in one-letter code: GTPase Obg (370 aa).

In terms of domain architecture, Obg spans 1 to 159 (MKFIDEARIE…RMLKLELKVL (159 aa)). The interval 128–147 (LHFKSSTNRAPRQKTDGKPG) is disordered. An OBG-type G domain is found at 160–334 (ADVGLLGMPN…LCYAIYDYLS (175 aa)). Residues 166-173 (GMPNAGKS), 191-195 (FTTLA), 213-216 (DIPG), 284-287 (NKLD), and 315-317 (SAL) contribute to the GTP site. Mg(2+) contacts are provided by S173 and T193.

It belongs to the TRAFAC class OBG-HflX-like GTPase superfamily. OBG GTPase family. Monomer. Mg(2+) is required as a cofactor.

The protein localises to the cytoplasm. Functionally, an essential GTPase which binds GTP, GDP and possibly (p)ppGpp with moderate affinity, with high nucleotide exchange rates and a fairly low GTP hydrolysis rate. Plays a role in control of the cell cycle, stress response, ribosome biogenesis and in those bacteria that undergo differentiation, in morphogenesis control. The polypeptide is GTPase Obg (Burkholderia cenocepacia (strain ATCC BAA-245 / DSM 16553 / LMG 16656 / NCTC 13227 / J2315 / CF5610) (Burkholderia cepacia (strain J2315))).